The primary structure comprises 510 residues: ATP synthase subunit alpha (510 aa).

An ATP-binding site is contributed by 170-177 (GDRQTGKT).

This sequence belongs to the ATPase alpha/beta chains family. F-type ATPases have 2 components, CF(1) - the catalytic core - and CF(0) - the membrane proton channel. CF(1) has five subunits: alpha(3), beta(3), gamma(1), delta(1), epsilon(1). CF(0) has three main subunits: a(1), b(2) and c(9-12). The alpha and beta chains form an alternating ring which encloses part of the gamma chain. CF(1) is attached to CF(0) by a central stalk formed by the gamma and epsilon chains, while a peripheral stalk is formed by the delta and b chains.

The protein localises to the cell inner membrane. The enzyme catalyses ATP + H2O + 4 H(+)(in) = ADP + phosphate + 5 H(+)(out). Functionally, produces ATP from ADP in the presence of a proton gradient across the membrane. The alpha chain is a regulatory subunit. The sequence is that of ATP synthase subunit alpha from Caulobacter vibrioides (strain ATCC 19089 / CIP 103742 / CB 15) (Caulobacter crescentus).